The chain runs to 380 residues: Kappa-type opioid receptor (380 aa).

Residues 1 to 57 are Extracellular-facing; sequence MEPPVQIFRGEPGPTCSPSTCLPPNGSGWFPGWAEPDGNGSAGSEDVLLEPAHISPV. Residues N25 and N39 are each glycosylated (N-linked (GlcNAc...) asparagine). A helical transmembrane segment spans residues 58–85; sequence ILVIITAVYSVVFVVGLVGNSLVMFVII. Over 86–95 the chain is Cytoplasmic; the sequence is RYTKMKTATN. Residues 96 to 119 form a helical membrane-spanning segment; that stretch reads IYIFNLALADALVTTTMPFQSTVY. Topologically, residues 120 to 132 are extracellular; sequence LMNSWPFGDVLCK. C131 and C210 are oxidised to a cystine. A helical transmembrane segment spans residues 133–154; sequence VVISIDYYNMFTSIFTLTMMSV. Residues 155-173 lie on the Cytoplasmic side of the membrane; it reads DRYIAVCHPVKALDFRTPL. Residues 174–196 traverse the membrane as a helical segment; that stretch reads KAKIINICIWILSSSVGISAIVL. At 197 to 222 the chain is on the extracellular side; the sequence is GGTKVREDMEVIECSLQFPDDDYSWW. Residues 223-247 form a helical membrane-spanning segment; that stretch reads DLFMKVCVFVFAFVIPVLIIIVCYT. Over 248–274 the chain is Cytoplasmic; the sequence is LMILRLKSVRLLSGSREKDRNLRRITR. The chain crosses the membrane as a helical span at residues 275 to 296; the sequence is LVLVVVAVFVVCWTPIHIFILV. The Extracellular portion of the chain corresponds to 297 to 311; it reads EALGSTAHSTAALSS. Residues 312–333 form a helical membrane-spanning segment; the sequence is YYFCIALGYTNSSLNPILYAFL. Residues 334–380 lie on the Cytoplasmic side of the membrane; that stretch reads DENFKRCFRDFCFPIKMRMERQSTSRVRNTVQDPAYVREVDGVNKPV. The S-palmitoyl cysteine moiety is linked to residue C345.

It belongs to the G-protein coupled receptor 1 family. Interacts with NHERF1. Interacts with GABARAPL1.

It is found in the cell membrane. Functionally, G-protein coupled opioid receptor that functions as a receptor for endogenous alpha-neoendorphins and dynorphins, but has low affinity for beta-endorphins. Also functions as a receptor for various synthetic opioids and for the psychoactive diterpene salvinorin A. Ligand binding causes a conformation change that triggers signaling via guanine nucleotide-binding proteins (G proteins) and modulates the activity of down-stream effectors, such as adenylate cyclase. Signaling leads to the inhibition of adenylate cyclase activity. Inhibits neurotransmitter release by reducing calcium ion currents and increasing potassium ion conductance. Plays a role in the perception of pain. Plays a role in mediating reduced physical activity upon treatment with synthetic opioids. Plays a role in the regulation of salivation in response to synthetic opioids. May play a role in arousal and regulation of autonomic and neuroendocrine functions. The protein is Kappa-type opioid receptor (OPRK1) of Bos taurus (Bovine).